The sequence spans 100 residues: Urease subunit gamma (100 aa).

This sequence belongs to the urease gamma subunit family. As to quaternary structure, heterotrimer of UreA (gamma), UreB (beta) and UreC (alpha) subunits. Three heterotrimers associate to form the active enzyme.

It localises to the cytoplasm. It carries out the reaction urea + 2 H2O + H(+) = hydrogencarbonate + 2 NH4(+). It participates in nitrogen metabolism; urea degradation; CO(2) and NH(3) from urea (urease route): step 1/1. This chain is Urease subunit gamma, found in Streptomyces coelicolor (strain ATCC BAA-471 / A3(2) / M145).